The chain runs to 437 residues: Protein farnesyltransferase subunit beta (437 aa).

PFTB repeat units follow at residues 123 to 164 (ATDV…CIIG), 174 to 215 (REKL…SLTN), 222 to 263 (FEGT…VILK), 270 to 312 (LKSL…PLLH), and 332 to 374 (QQAL…SIAQ). Residues 248-251 (HGGY) and 291-294 (RCNK) each bind (2E,6E)-farnesyl diphosphate. Residues D297 and C299 each contribute to the Zn(2+) site. Residue 300–303 (YSFW) participates in (2E,6E)-farnesyl diphosphate binding. Residue H362 coordinates Zn(2+). Position 436 is a phosphothreonine (T436).

Belongs to the protein prenyltransferase subunit beta family. In terms of assembly, heterodimer of FNTA and FNTB. Zn(2+) serves as cofactor.

The enzyme catalyses L-cysteinyl-[protein] + (2E,6E)-farnesyl diphosphate = S-(2E,6E)-farnesyl-L-cysteinyl-[protein] + diphosphate. Functionally, essential subunit of the farnesyltransferase complex. Catalyzes the transfer of a farnesyl moiety from farnesyl diphosphate to a cysteine at the fourth position from the C-terminus of several proteins having the C-terminal sequence Cys-aliphatic-aliphatic-X. This is Protein farnesyltransferase subunit beta (FNTB) from Homo sapiens (Human).